We begin with the raw amino-acid sequence, 141 residues long: Hemoglobin subunit alpha-1 (141 aa).

Residues 1 to 141 enclose the Globin domain; it reads VLSPADKNNV…VSTVLTSKYR (141 aa). Residue H58 participates in O2 binding. H87 lines the heme b pocket.

Belongs to the globin family. Heterotetramer of two alpha chains and two beta chains. As to expression, red blood cells.

Its function is as follows. Involved in oxygen transport from the lung to the various peripheral tissues. The chain is Hemoglobin subunit alpha-1 from Varecia variegata (Black-and-white ruffed lemur).